The sequence spans 65 residues: Prokaryotic ubiquitin-like protein Pup (65 aa).

A compositionally biased stretch (basic and acidic residues) spans 1–13 (MAQEQKQPRKSSE). A disordered region spans residues 1 to 34 (MAQEQKQPRKSSEADEAVEAVAETDVSERKEALD). The interval 21 to 59 (VAETDVSERKEALDSDVDDILDEIDDVLETNAEDFVKSF) is ARC ATPase binding. Residues 25–49 (DVSERKEALDSDVDDILDEIDDVLE) are a coiled coil. E65 is covalently cross-linked (Isoglutamyl lysine isopeptide (Glu-Lys) (interchain with K-? in acceptor proteins)).

It belongs to the prokaryotic ubiquitin-like protein family. As to quaternary structure, strongly interacts with the proteasome-associated ATPase ARC through a hydrophobic interface; the interacting region of Pup lies in its C-terminal half. There is one Pup binding site per ARC hexamer ring.

It functions in the pathway protein degradation; proteasomal Pup-dependent pathway. Protein modifier that is covalently attached to lysine residues of substrate proteins, thereby targeting them for proteasomal degradation. The tagging system is termed pupylation. This is Prokaryotic ubiquitin-like protein Pup from Nocardioides sp. (strain ATCC BAA-499 / JS614).